Here is a 287-residue protein sequence, read N- to C-terminus: Cysteine-rich repeat secretory protein 59 (287 aa).

The signal sequence occupies residues 1–26 (METTKKLSPIFCFSSLLCLFFTMNQA). Gnk2-homologous domains are found at residues 32-134 (HMDT…DKFF) and 140-250 (KKPN…ITTS). Residues Asn-43, Asn-47, Asn-63, Asn-72, Asn-93, Asn-103, Asn-111, and Asn-212 are each glycosylated (N-linked (GlcNAc...) asparagine).

The protein belongs to the cysteine-rich repeat secretory protein family.

It localises to the secreted. In Arabidopsis thaliana (Mouse-ear cress), this protein is Cysteine-rich repeat secretory protein 59 (CRRSP59).